Consider the following 606-residue polypeptide: Transcription factor glial cells missing 2 (606 aa).

Over residues 20-37 (DHSQLTQFVQPQSQSTHS) the composition is skewed to polar residues. Disordered stretches follow at residues 20–65 (DHSQ…KGKR), 475–501 (EMQQHHHQQQQSHQQFGGNQTAGHHYY), and 561–606 (TAPT…SVTH). Residues 44–61 (PGQQQAGGSMTMPSSSTG) are compositionally biased toward low complexity. Positions 65-224 (REWDINDAIV…KNSSVSKRAF (160 aa)) form a DNA-binding region, GCM. Residues 490–501 (FGGNQTAGHHYY) show a composition bias toward polar residues. A compositionally biased stretch (pro residues) spans 569 to 580 (PGHPPPPPPPPT). The span at 583–593 (YHHHHHHHLHH) shows a compositional bias: basic residues. Low complexity predominate over residues 594–606 (PAAATGLAPSVTH).

As to expression, expressed in glial lineages within embryonic procephalic mesoderm. Expression is highest in hemocyte primordia and longitudinal and nerve root ganglia.

The protein resides in the nucleus. Transcription factor with a minor role promoting glial cell differentiation and a more significant role in hematocyte differentiation. Gcm2, together with gcm, is required for the proliferation of plasmatocyte precursors, the expression of Croquemort protein, and the ability of plasmatocytes to convert into macrophages. The polypeptide is Transcription factor glial cells missing 2 (gcm2) (Drosophila melanogaster (Fruit fly)).